A 337-amino-acid polypeptide reads, in one-letter code: Anthranilate phosphoribosyltransferase (337 aa).

5-phospho-alpha-D-ribose 1-diphosphate-binding positions include G82, 85 to 86 (GD), T90, 92 to 95 (NIST), 110 to 118 (KHGNRAMSS), and T122. Residue G82 participates in anthranilate binding. A Mg(2+)-binding site is contributed by S94. N113 provides a ligand contact to anthranilate. Residue R168 participates in anthranilate binding. 2 residues coordinate Mg(2+): D226 and E227.

Belongs to the anthranilate phosphoribosyltransferase family. Homodimer. Mg(2+) is required as a cofactor.

The enzyme catalyses N-(5-phospho-beta-D-ribosyl)anthranilate + diphosphate = 5-phospho-alpha-D-ribose 1-diphosphate + anthranilate. It participates in amino-acid biosynthesis; L-tryptophan biosynthesis; L-tryptophan from chorismate: step 2/5. Functionally, catalyzes the transfer of the phosphoribosyl group of 5-phosphorylribose-1-pyrophosphate (PRPP) to anthranilate to yield N-(5'-phosphoribosyl)-anthranilate (PRA). The polypeptide is Anthranilate phosphoribosyltransferase (Phenylobacterium zucineum (strain HLK1)).